Reading from the N-terminus, the 607-residue chain is WD repeat-containing protein 1-A (607 aa).

WD repeat units lie at residues Glu4–Ile45, Pro48–Thr87, Leu93–Thr135, Ser138–Gly176, Lys180–Gly218, Val224–Val263, Thr270–Lys306, Arg311–Ala351, Thr358–Val408, Leu432–Ile474, Lys480–Val518, Ser523–Leu561, and Thr566–Val604.

Belongs to the WD repeat AIP1 family.

Its subcellular location is the cell membrane. It is found in the cytoplasm. The protein localises to the cytoskeleton. The protein resides in the nucleus. Functionally, induces disassembly of actin filaments in conjunction with ADF/cofilin family proteins. Doesn't sever actin filaments alone, but caps the barbed ends of filaments severed by cofilin, which blocks annealing and depolymerization and allows more extensive severing by cofilin. The chain is WD repeat-containing protein 1-A (wdr1-a) from Xenopus laevis (African clawed frog).